The sequence spans 403 residues: DNA replication and repair protein RecF (403 aa).

30–37 (GSNGLGKT) provides a ligand contact to ATP.

It belongs to the RecF family.

It localises to the cytoplasm. Functionally, the RecF protein is involved in DNA metabolism; it is required for DNA replication and normal SOS inducibility. RecF binds preferentially to single-stranded, linear DNA. It also seems to bind ATP. The sequence is that of DNA replication and repair protein RecF from Bifidobacterium adolescentis (strain ATCC 15703 / DSM 20083 / NCTC 11814 / E194a).